A 25-amino-acid polypeptide reads, in one-letter code: Ribosome-inactivating protein velutin (25 aa).

Residues 1–25 (XHPDLFXXRPDNTASPKFEDPRLNP) are disordered.

The protein belongs to the ribosome-inactivating protein family.

It carries out the reaction Endohydrolysis of the N-glycosidic bond at one specific adenosine on the 28S rRNA.. In terms of biological role, inhibits protein synthesis but does not possess ribonuclease activity. Also inhibits HIV-1 reverse transcriptase, beta-glucosidase and beta-glucuronidase. This Flammulina velutipes (Agaricus velutipes) protein is Ribosome-inactivating protein velutin.